Consider the following 361-residue polypeptide: Chorismate synthase (361 aa).

Residues R48 and R54 each contribute to the NADP(+) site. FMN-binding positions include 125–127, 238–239, G278, 293–297, and R319; these read RSS, NA, and KPTSS.

This sequence belongs to the chorismate synthase family. As to quaternary structure, homotetramer. Requires FMNH2 as cofactor.

It catalyses the reaction 5-O-(1-carboxyvinyl)-3-phosphoshikimate = chorismate + phosphate. It participates in metabolic intermediate biosynthesis; chorismate biosynthesis; chorismate from D-erythrose 4-phosphate and phosphoenolpyruvate: step 7/7. In terms of biological role, catalyzes the anti-1,4-elimination of the C-3 phosphate and the C-6 proR hydrogen from 5-enolpyruvylshikimate-3-phosphate (EPSP) to yield chorismate, which is the branch point compound that serves as the starting substrate for the three terminal pathways of aromatic amino acid biosynthesis. This reaction introduces a second double bond into the aromatic ring system. The protein is Chorismate synthase of Shigella flexneri.